Here is a 95-residue protein sequence, read N- to C-terminus: MVYIANGQVLDGQSRSPWRLSFLTDMFWGITDFIVMFFQSIIHPNVTRRGCQNSSSRTRFDDGRGPPGNPRRRMGRIDHNSGPNAPPMSGGGUGR.

The chain crosses the membrane as a helical span at residues 20–42 (LSFLTDMFWGITDFIVMFFQSII). The interval 48–95 (RRGCQNSSSRTRFDDGRGPPGNPRRRMGRIDHNSGPNAPPMSGGGUGR) is disordered. A non-standard amino acid (selenocysteine) is located at residue Sec-93.

The protein belongs to the selenoprotein K family.

Its subcellular location is the endoplasmic reticulum membrane. It localises to the cell membrane. Its function is as follows. Required for Ca(2+) flux in immune cells and plays a role in T-cell proliferation and in T-cell and neutrophil migration. Involved in endoplasmic reticulum-associated degradation (ERAD) of soluble glycosylated proteins. Required for cell surface expression of CD36 and involved in macrophage uptake of low-density lipoprotein and in foam cell formation. Required for palmitoylation. The sequence is that of Selenoprotein K (selenok) from Xenopus tropicalis (Western clawed frog).